We begin with the raw amino-acid sequence, 850 residues long: Ras GTPase-activating protein 2 (850 aa).

Low complexity predominate over residues 1–24 (MAAAAPAAAAASSEAPAASATAEP). A disordered region spans residues 1 to 32 (MAAAAPAAAAASSEAPAASATAEPEAGDQDSR). Alanine 2 is modified (N-acetylalanine). 2 consecutive C2 domains span residues 20–138 (ATAE…ETWF) and 149–289 (VQGK…QAWY). The Ras-GAP domain occupies 372–589 (DKLVPFATAV…IAVKKFLDEI (218 aa)). Serine 555 carries the post-translational modification Phosphoserine. The PH domain occupies 604 to 706 (VHLKEGEMYK…WIDVLCRVSR (103 aa)). A Btk-type zinc finger spans residues 708-744 (NQNRLSFYHPSVYLNGNWLCCQETGENTLGCKPCTAG). Residues histidine 716, cysteine 727, cysteine 728, and cysteine 738 each contribute to the Zn(2+) site. Residues 825–850 (HEKYRKKRSSSAKYGSKENPIVGKAS) are disordered.

Its subcellular location is the cytoplasm. The protein resides in the perinuclear region. In terms of biological role, inhibitory regulator of the Ras-cyclic AMP pathway. Binds inositol tetrakisphosphate (IP4). This is Ras GTPase-activating protein 2 (RASA2) from Homo sapiens (Human).